The following is a 124-amino-acid chain: Histone H2A (124 aa).

The segment covering 1–18 (MSGRGKGGKAKGKSKSRS) has biased composition (basic residues). A disordered region spans residues 1 to 23 (MSGRGKGGKAKGKSKSRSSRAGL). S2 carries the post-translational modification N-acetylserine. Residue S2 is modified to Phosphoserine. Q104 is subject to N5-methylglutamine.

This sequence belongs to the histone H2A family. In terms of assembly, the nucleosome is a histone octamer containing two molecules each of H2A, H2B, H3 and H4 assembled in one H3-H4 heterotetramer and two H2A-H2B heterodimers. The octamer wraps approximately 147 bp of DNA. The N-terminal serine is acetylated. That serine is also phosphorylated in approximately 60% of the molecules isolated from erythrocytes.

The protein localises to the nucleus. It is found in the chromosome. Its function is as follows. Core component of nucleosome. Nucleosomes wrap and compact DNA into chromatin, limiting DNA accessibility to the cellular machineries which require DNA as a template. Histones thereby play a central role in transcription regulation, DNA repair, DNA replication and chromosomal stability. DNA accessibility is regulated via a complex set of post-translational modifications of histones, also called histone code, and nucleosome remodeling. The chain is Histone H2A from Sipunculus nudus (Sipunculan worm).